The following is a 704-amino-acid chain: Capsule polysaccharide modification protein LipA (704 aa).

The protein localises to the cell inner membrane. Functionally, involved in the phospholipid modification of the capsular polysaccharide, a strong requirement for its translocation to the cell surface. This chain is Capsule polysaccharide modification protein LipA (lipA), found in Neisseria meningitidis serogroup A / serotype 4A (strain DSM 15465 / Z2491).